The primary structure comprises 311 residues: Aspartate carbamoyltransferase catalytic subunit (311 aa).

Residues Arg55 and Thr56 each contribute to the carbamoyl phosphate site. Lys84 serves as a coordination point for L-aspartate. Positions 105, 133, and 136 each coordinate carbamoyl phosphate. L-aspartate contacts are provided by Arg166 and Arg229. Leu268 and Pro269 together coordinate carbamoyl phosphate.

The protein belongs to the aspartate/ornithine carbamoyltransferase superfamily. ATCase family. As to quaternary structure, heterododecamer (2C3:3R2) of six catalytic PyrB chains organized as two trimers (C3), and six regulatory PyrI chains organized as three dimers (R2).

It catalyses the reaction carbamoyl phosphate + L-aspartate = N-carbamoyl-L-aspartate + phosphate + H(+). It functions in the pathway pyrimidine metabolism; UMP biosynthesis via de novo pathway; (S)-dihydroorotate from bicarbonate: step 2/3. Its function is as follows. Catalyzes the condensation of carbamoyl phosphate and aspartate to form carbamoyl aspartate and inorganic phosphate, the committed step in the de novo pyrimidine nucleotide biosynthesis pathway. The chain is Aspartate carbamoyltransferase catalytic subunit from Alkaliphilus metalliredigens (strain QYMF).